The following is a 445-amino-acid chain: Argininosuccinate synthase (445 aa).

ATP-binding positions include 17 to 25 (AFSGGLDTS) and A43. Y99 lines the L-citrulline pocket. G129 and T131 together coordinate ATP. The L-aspartate site is built by T131, N135, and D136. N135 provides a ligand contact to L-citrulline. D136 contacts ATP. L-citrulline-binding residues include R139 and S192. D194 serves as a coordination point for ATP. T201, E203, and E280 together coordinate L-citrulline.

This sequence belongs to the argininosuccinate synthase family. Type 2 subfamily. In terms of assembly, homotetramer.

The protein localises to the cytoplasm. The enzyme catalyses L-citrulline + L-aspartate + ATP = 2-(N(omega)-L-arginino)succinate + AMP + diphosphate + H(+). It functions in the pathway amino-acid biosynthesis; L-arginine biosynthesis; L-arginine from L-ornithine and carbamoyl phosphate: step 2/3. The chain is Argininosuccinate synthase (argG) from Ralstonia nicotianae (strain ATCC BAA-1114 / GMI1000) (Ralstonia solanacearum).